Here is a 456-residue protein sequence, read N- to C-terminus: tRNA-2-methylthio-N(6)-dimethylallyladenosine synthase (456 aa).

An MTTase N-terminal domain is found at 19–137 (KHFFIETWGC…FPEYLHRVQV (119 aa)). The [4Fe-4S] cluster site is built by C28, C64, C98, C174, C178, and C181. The Radical SAM core domain maps to 160–392 (RKSNVKAFVT…AVNEGIVVGN (233 aa)). Residues 393-456 (KAAEGKIYEV…SFSLVGEVVE (64 aa)) form the TRAM domain.

This sequence belongs to the methylthiotransferase family. MiaB subfamily. As to quaternary structure, monomer. [4Fe-4S] cluster is required as a cofactor.

It localises to the cytoplasm. It catalyses the reaction N(6)-dimethylallyladenosine(37) in tRNA + (sulfur carrier)-SH + AH2 + 2 S-adenosyl-L-methionine = 2-methylsulfanyl-N(6)-dimethylallyladenosine(37) in tRNA + (sulfur carrier)-H + 5'-deoxyadenosine + L-methionine + A + S-adenosyl-L-homocysteine + 2 H(+). Catalyzes the methylthiolation of N6-(dimethylallyl)adenosine (i(6)A), leading to the formation of 2-methylthio-N6-(dimethylallyl)adenosine (ms(2)i(6)A) at position 37 in tRNAs that read codons beginning with uridine. This chain is tRNA-2-methylthio-N(6)-dimethylallyladenosine synthase, found in Clostridium botulinum (strain Eklund 17B / Type B).